A 545-amino-acid polypeptide reads, in one-letter code: Chaperonin GroEL (545 aa).

ATP is bound by residues 30-33 (TLGP), lysine 51, 87-91 (DGTTT), glycine 413, 477-479 (NAA), and aspartate 493.

This sequence belongs to the chaperonin (HSP60) family. In terms of assembly, forms a cylinder of 14 subunits composed of two heptameric rings stacked back-to-back. Interacts with the co-chaperonin GroES.

The protein localises to the cytoplasm. It carries out the reaction ATP + H2O + a folded polypeptide = ADP + phosphate + an unfolded polypeptide.. Together with its co-chaperonin GroES, plays an essential role in assisting protein folding. The GroEL-GroES system forms a nano-cage that allows encapsulation of the non-native substrate proteins and provides a physical environment optimized to promote and accelerate protein folding. The protein is Chaperonin GroEL of Pseudomonas putida (Arthrobacter siderocapsulatus).